The chain runs to 517 residues: Membrane-bound lytic murein transglycosylase F (517 aa).

A signal peptide spans 1 to 32 (MKKFKINYLLIGIVTLLLAAALWPSIPWFGKA). Positions 33 to 269 (ENRIAAIQSR…RLEEKYLGHG (237 aa)) are non-LT domain. The tract at residues 270-517 (GDFDYVDTRS…PNTLVQAPRR (248 aa)) is LT domain. Glutamate 314 is an active-site residue.

It in the N-terminal section; belongs to the bacterial solute-binding protein 3 family. The protein in the C-terminal section; belongs to the transglycosylase Slt family.

The protein resides in the cell outer membrane. It carries out the reaction Exolytic cleavage of the (1-&gt;4)-beta-glycosidic linkage between N-acetylmuramic acid (MurNAc) and N-acetylglucosamine (GlcNAc) residues in peptidoglycan, from either the reducing or the non-reducing ends of the peptidoglycan chains, with concomitant formation of a 1,6-anhydrobond in the MurNAc residue.. Its function is as follows. Murein-degrading enzyme that degrades murein glycan strands and insoluble, high-molecular weight murein sacculi, with the concomitant formation of a 1,6-anhydromuramoyl product. Lytic transglycosylases (LTs) play an integral role in the metabolism of the peptidoglycan (PG) sacculus. Their lytic action creates space within the PG sacculus to allow for its expansion as well as for the insertion of various structures such as secretion systems and flagella. The sequence is that of Membrane-bound lytic murein transglycosylase F from Enterobacter sp. (strain 638).